Consider the following 542-residue polypeptide: 1,3-beta-glucanosyltransferase gas1 (542 aa).

An N-terminal signal peptide occupies residues 1-19 (MKFSILSLAVAGLVGLAKA). Asparagine 35 carries N-linked (GlcNAc...) asparagine glycosylation. A disulfide bridge connects residues cysteine 70 and cysteine 99. Tyrosine 88 is a binding site for (1,3-beta-D-glucosyl)n. N-linked (GlcNAc...) asparagine glycosylation is present at asparagine 91. Residues asparagine 156 and glutamate 157 each contribute to the (1,3-beta-D-glucosyl)n site. The Proton donor role is filled by glutamate 157. N-linked (GlcNAc...) asparagine glycosylation occurs at asparagine 161. (1,3-beta-D-glucosyl)n contacts are provided by aspartate 198 and arginine 203. Intrachain disulfides connect cysteine 212–cysteine 345, cysteine 230–cysteine 261, cysteine 367–cysteine 419, cysteine 376–cysteine 439, and cysteine 395–cysteine 400. Asparagine 249 carries N-linked (GlcNAc...) asparagine glycosylation. The active-site Nucleophile is glutamate 258. N-linked (GlcNAc...) asparagine glycosylation occurs at asparagine 279. Tyrosine 290 contacts (1,3-beta-D-glucosyl)n. Asparagine 406, asparagine 484, asparagine 502, and asparagine 509 each carry an N-linked (GlcNAc...) asparagine glycan. The tract at residues 490–515 (MSTSYTSGSGSSNSSGSSSNSSSKSS) is disordered. A lipid anchor (GPI-anchor amidated serine) is attached at serine 516. Residues 517-542 (GASSYNLNMVITFLSVVIGGTAVLFI) constitute a propeptide, removed in mature form.

This sequence belongs to the glycosyl hydrolase 72 family. Post-translationally, the GPI-anchor is attached to the protein in the endoplasmic reticulum and serves to target the protein to the cell surface. There, the glucosamine-inositol phospholipid moiety is cleaved off and the GPI-modified mannoprotein is covalently attached via its lipidless GPI glycan remnant to the 1,6-beta-glucan of the outer cell wall layer.

Its subcellular location is the secreted. The protein resides in the cell wall. It localises to the membrane. In terms of biological role, splits internally a 1,3-beta-glucan molecule and transfers the newly generated reducing end (the donor) to the non-reducing end of another 1,3-beta-glucan molecule (the acceptor) forming a 1,3-beta linkage, resulting in the elongation of 1,3-beta-glucan chains in the cell wall. The sequence is that of 1,3-beta-glucanosyltransferase gas1 (gas1) from Schizosaccharomyces pombe (strain 972 / ATCC 24843) (Fission yeast).